The chain runs to 1036 residues: Ubiquitin carboxyl-terminal hydrolase 48 (1036 aa).

Residues 89-421 (VGLTNLGASC…NAYMLVYRLQ (333 aa)) form the USP domain. The active-site Nucleophile is the C98. H353 functions as the Proton acceptor in the catalytic mechanism. DUSP domains lie at 460–554 (QSVD…KALC), 569–692 (NQLN…YKEC), and 712–825 (MIAK…RIEV). A disordered region spans residues 611–644 (DEQDGEAEQSNGKINGSPFSKDESKEEKKEEEEE). Residues 618-628 (EQSNGKINGSP) show a composition bias toward polar residues. The tract at residues 881–924 (APELNVSSSETEEDKEEAKPDGEKDPDFNQSNGGTKRQKTSQQG) is disordered. S887, S888, and S889 each carry phosphoserine. Basic and acidic residues predominate over residues 896-907 (EEAKPDGEKDPD). The span at 908–924 (FNQSNGGTKRQKTSQQG) shows a compositional bias: polar residues. Residues 930 to 1010 (KQVIRRSTRH…ILLKADEPIA (81 aa)) form the Ubiquitin-like domain. K957 bears the N6-acetyllysine mark.

Belongs to the peptidase C19 family. In terms of assembly, interacts with TRAF2 and RELA. Interacts with GPS1. Present in the brain, in particular in the postsynaptic density and the dendritic lipid raft fractions (at protein level).

Its subcellular location is the cytoplasm. It is found in the nucleus. The protein localises to the cell projection. The protein resides in the cilium. The catalysed reaction is Thiol-dependent hydrolysis of ester, thioester, amide, peptide and isopeptide bonds formed by the C-terminal Gly of ubiquitin (a 76-residue protein attached to proteins as an intracellular targeting signal).. Functionally, deubiquitinase that recognizes and hydrolyzes the peptide bond at the C-terminal Gly of ubiquitin. Involved in the processing of polyubiquitin precursors as well as that of ubiquitinated proteins. Plays a role in the regulation of NF-kappa-B activation by TNF receptor superfamily via its interactions with RELA and TRAF2. May also play a regulatory role at postsynaptic sites. Plays an important role in cell cycle progression by deubiquitinating Aurora B/AURKB and thereby extending its stability. In the context of H. pylori infection, stabilizes nuclear RELA through deubiquitination, thereby promoting the transcriptional activity of RELA to prolong TNFAIP3 de novo synthesis. Consequently, TNFAIP3 suppresses caspase activity and apoptotic cell death. Also functions in the modulation of the ciliary and synaptic transport as well as cytoskeleton organization, which are key for photoreceptor function and homeostasis. To achieve this, stabilizes the levels of the retinal degeneration-associated proteins ARL3 and UNC119 using distinct mechanisms. Plays a positive role in pyroptosis by stabilizing gasdermin E/GSDME through removal of its 'Lys-48'-linked ubiquitination. The polypeptide is Ubiquitin carboxyl-terminal hydrolase 48 (Usp48) (Rattus norvegicus (Rat)).